We begin with the raw amino-acid sequence, 312 residues long: Serine/threonine-protein phosphatase PP1 isozyme 5 (312 aa).

A2 bears the N-acetylalanine mark. The Mn(2+) site is built by D70, H72, D98, and N130. H131 functions as the Proton donor in the catalytic mechanism. Residues H179 and H254 each coordinate Mn(2+).

Belongs to the PPP phosphatase family. PP-1 subfamily. It depends on Mn(2+) as a cofactor.

Its subcellular location is the nucleus. The protein localises to the cytoplasm. It carries out the reaction O-phospho-L-seryl-[protein] + H2O = L-seryl-[protein] + phosphate. It catalyses the reaction O-phospho-L-threonyl-[protein] + H2O = L-threonyl-[protein] + phosphate. Phosphatase activity is strongly reduced by the protein phosphatase inhibitor 2 (I-2). In terms of biological role, serine/threonine-protein phosphatase that possesses phosphatase activity toward para-nitrophenyl phosphate (pNPP) in vitro. This Arabidopsis thaliana (Mouse-ear cress) protein is Serine/threonine-protein phosphatase PP1 isozyme 5.